The chain runs to 270 residues: Phosphatidylglycerol--prolipoprotein diacylglyceryl transferase (270 aa).

Helical transmembrane passes span 17 to 37, 59 to 79, 95 to 115, 129 to 149, 175 to 195, 202 to 222, and 237 to 257; these read LAIRWYGLMYLAGFIMFLWFG, MLFYGVLGVILGGRLGYVLFY, WEGGMAFHGGFLGVLIAMWVF, FIAPMIPCGLAAGRIGNFING, PSQLYQFAGEGVALFIILWLF, MGAVSGVFLIGYGAFRFLAEF, and LSMGQWLSLPMIVIGAVMVVW. R142 lines the a 1,2-diacyl-sn-glycero-3-phospho-(1'-sn-glycerol) pocket.

This sequence belongs to the Lgt family.

It localises to the cell inner membrane. The catalysed reaction is L-cysteinyl-[prolipoprotein] + a 1,2-diacyl-sn-glycero-3-phospho-(1'-sn-glycerol) = an S-1,2-diacyl-sn-glyceryl-L-cysteinyl-[prolipoprotein] + sn-glycerol 1-phosphate + H(+). It participates in protein modification; lipoprotein biosynthesis (diacylglyceryl transfer). Its function is as follows. Catalyzes the transfer of the diacylglyceryl group from phosphatidylglycerol to the sulfhydryl group of the N-terminal cysteine of a prolipoprotein, the first step in the formation of mature lipoproteins. This is Phosphatidylglycerol--prolipoprotein diacylglyceryl transferase from Cupriavidus metallidurans (strain ATCC 43123 / DSM 2839 / NBRC 102507 / CH34) (Ralstonia metallidurans).